A 211-amino-acid chain; its full sequence is FMN-dependent NADH:quinone oxidoreductase 2 (211 aa).

Methionine 102–phenylalanine 105 is an FMN binding site.

This sequence belongs to the azoreductase type 1 family. As to quaternary structure, homodimer. FMN is required as a cofactor.

The enzyme catalyses 2 a quinone + NADH + H(+) = 2 a 1,4-benzosemiquinone + NAD(+). The catalysed reaction is N,N-dimethyl-1,4-phenylenediamine + anthranilate + 2 NAD(+) = 2-(4-dimethylaminophenyl)diazenylbenzoate + 2 NADH + 2 H(+). In terms of biological role, quinone reductase that provides resistance to thiol-specific stress caused by electrophilic quinones. Also exhibits azoreductase activity. Catalyzes the reductive cleavage of the azo bond in aromatic azo compounds to the corresponding amines. The sequence is that of FMN-dependent NADH:quinone oxidoreductase 2 from Bacillus cereus (strain ATCC 14579 / DSM 31 / CCUG 7414 / JCM 2152 / NBRC 15305 / NCIMB 9373 / NCTC 2599 / NRRL B-3711).